Consider the following 277-residue polypeptide: Shikimate dehydrogenase (NADP(+)) (277 aa).

Residues 15–17 (SKS) and Thr64 contribute to the shikimate site. Lys68 serves as the catalytic Proton acceptor. Shikimate-binding residues include Asn89 and Asp104. NADP(+) is bound by residues 129 to 133 (GAGGA), 153 to 158 (NRTAKR), and Met217. Tyr219 serves as a coordination point for shikimate. Gly242 contributes to the NADP(+) binding site.

The protein belongs to the shikimate dehydrogenase family. Homodimer.

The catalysed reaction is shikimate + NADP(+) = 3-dehydroshikimate + NADPH + H(+). It functions in the pathway metabolic intermediate biosynthesis; chorismate biosynthesis; chorismate from D-erythrose 4-phosphate and phosphoenolpyruvate: step 4/7. Functionally, involved in the biosynthesis of the chorismate, which leads to the biosynthesis of aromatic amino acids. Catalyzes the reversible NADPH linked reduction of 3-dehydroshikimate (DHSA) to yield shikimate (SA). This is Shikimate dehydrogenase (NADP(+)) from Hydrogenovibrio crunogenus (strain DSM 25203 / XCL-2) (Thiomicrospira crunogena).